The following is a 379-amino-acid chain: MSAIRYELIKTDKQTGARLGKIHTPHGTFDTPMFMPVGTLATVKTMSPEELKAMGAGIILSNTYHLWLRPGEELIREAGGLHKFMNWDQPILTDSGGFQVFSLSKMRDIKEEGVHFRNHLNGDKLFLSPEKAIQIQNALGSDIMMSFDECPPYPASHEYMKKSVERTSRWAERGLKAHERPEDQGLFGIVQGGAYEDLRAQSAKDLVSLDFPGYSIGGLSVGEPKDVMNRVLEHTTPLLPANKPRYLMGVGSPDSLIDGVIRGVDMFDCVLPTRIARNGTCMTSSGRLVIKNAKFTHDFRPIDENCDCYTCKNYSRAYIRHLIRCEETFGIRLTTYHNLHFLLNLMKQVRGAIMEDRLADFREEFFEQYGFNRPDAKNF.

Aspartate 94 (proton acceptor) is an active-site residue. Residues 94 to 98, aspartate 148, glutamine 191, and glycine 218 contribute to the substrate site; that span reads DSGGF. Residues 249–255 are RNA binding; sequence GVGSPDS. Aspartate 268 (nucleophile) is an active-site residue. Residues 273-277 form an RNA binding; important for wobble base 34 recognition region; it reads TRIAR. Residues cysteine 306, cysteine 308, cysteine 311, and histidine 337 each contribute to the Zn(2+) site.

Belongs to the queuine tRNA-ribosyltransferase family. Homodimer. Within each dimer, one monomer is responsible for RNA recognition and catalysis, while the other monomer binds to the replacement base PreQ1. It depends on Zn(2+) as a cofactor.

It catalyses the reaction 7-aminomethyl-7-carbaguanine + guanosine(34) in tRNA = 7-aminomethyl-7-carbaguanosine(34) in tRNA + guanine. It functions in the pathway tRNA modification; tRNA-queuosine biosynthesis. Functionally, catalyzes the base-exchange of a guanine (G) residue with the queuine precursor 7-aminomethyl-7-deazaguanine (PreQ1) at position 34 (anticodon wobble position) in tRNAs with GU(N) anticodons (tRNA-Asp, -Asn, -His and -Tyr). Catalysis occurs through a double-displacement mechanism. The nucleophile active site attacks the C1' of nucleotide 34 to detach the guanine base from the RNA, forming a covalent enzyme-RNA intermediate. The proton acceptor active site deprotonates the incoming PreQ1, allowing a nucleophilic attack on the C1' of the ribose to form the product. After dissociation, two additional enzymatic reactions on the tRNA convert PreQ1 to queuine (Q), resulting in the hypermodified nucleoside queuosine (7-(((4,5-cis-dihydroxy-2-cyclopenten-1-yl)amino)methyl)-7-deazaguanosine). The chain is Queuine tRNA-ribosyltransferase from Listeria monocytogenes serotype 4a (strain HCC23).